Consider the following 538-residue polypeptide: Methionine--tRNA ligase (538 aa).

The 'HIGH' region motif lies at 21–31; the sequence is YYVNDAPHLGH. Residues cysteine 137, cysteine 140, cysteine 162, and histidine 165 each coordinate Zn(2+). Positions 313–317 match the 'KMSKS' region motif; it reads KMSKS. Lysine 316 is a binding site for ATP.

The protein belongs to the class-I aminoacyl-tRNA synthetase family. MetG type 2A subfamily. As to quaternary structure, monomer. The cofactor is Zn(2+).

It localises to the cytoplasm. It carries out the reaction tRNA(Met) + L-methionine + ATP = L-methionyl-tRNA(Met) + AMP + diphosphate. Its function is as follows. Is required not only for elongation of protein synthesis but also for the initiation of all mRNA translation through initiator tRNA(fMet) aminoacylation. In Streptomyces coelicolor (strain ATCC BAA-471 / A3(2) / M145), this protein is Methionine--tRNA ligase.